We begin with the raw amino-acid sequence, 623 residues long: Putative chaperone protein ClpB2, chloroplastic (623 aa).

The Clp R domain occupies 1–123 (MNDLKFDPNV…KSEVEKLRGE (123 aa)). 2 repeat regions span residues 6–71 (FDPN…NQSL) and 77–123 (RNLG…LRGE). The interval 129 to 375 (LKTYGTDLVE…HVKAQLDIQP (247 aa)) is i. Residue 172–179 (GEPGVGKT) coordinates ATP. Residues 368–462 (KAQLDIQPEE…LQEAERQHDV (95 aa)) are a coiled coil. 571–578 (GPTGVGKT) is a binding site for ATP.

This sequence belongs to the ClpA/ClpB family.

This chain is Putative chaperone protein ClpB2, chloroplastic (CLPB2), found in Arabidopsis thaliana (Mouse-ear cress).